A 610-amino-acid polypeptide reads, in one-letter code: Elongation factor 4 (610 aa).

Positions 12-194 constitute a tr-type G domain; the sequence is EKIRNFSIIA…QIVEKVPAPQ (183 aa). Residues 24–29 and 141–144 each bind GTP; these read DHGKST and NKID.

It belongs to the TRAFAC class translation factor GTPase superfamily. Classic translation factor GTPase family. LepA subfamily.

It localises to the cell membrane. The enzyme catalyses GTP + H2O = GDP + phosphate + H(+). Functionally, required for accurate and efficient protein synthesis under certain stress conditions. May act as a fidelity factor of the translation reaction, by catalyzing a one-codon backward translocation of tRNAs on improperly translocated ribosomes. Back-translocation proceeds from a post-translocation (POST) complex to a pre-translocation (PRE) complex, thus giving elongation factor G a second chance to translocate the tRNAs correctly. Binds to ribosomes in a GTP-dependent manner. In Streptococcus thermophilus (strain ATCC BAA-250 / LMG 18311), this protein is Elongation factor 4.